A 573-amino-acid chain; its full sequence is Phosphoenolpyruvate-protein phosphotransferase (573 aa).

Histidine 190 (tele-phosphohistidine intermediate) is an active-site residue. Arginine 297 and arginine 334 together coordinate phosphoenolpyruvate. Residues glutamate 433 and aspartate 457 each contribute to the Mg(2+) site. Residues 456 to 457 (ND) and arginine 467 each bind phosphoenolpyruvate. Catalysis depends on cysteine 504, which acts as the Proton donor.

The protein belongs to the PEP-utilizing enzyme family. Homodimer. It depends on Mg(2+) as a cofactor.

It is found in the cytoplasm. It carries out the reaction L-histidyl-[protein] + phosphoenolpyruvate = N(pros)-phospho-L-histidyl-[protein] + pyruvate. Functionally, general (non sugar-specific) component of the phosphoenolpyruvate-dependent sugar phosphotransferase system (sugar PTS). This major carbohydrate active-transport system catalyzes the phosphorylation of incoming sugar substrates concomitantly with their translocation across the cell membrane. Enzyme I transfers the phosphoryl group from phosphoenolpyruvate (PEP) to the phosphoryl carrier protein (HPr). This chain is Phosphoenolpyruvate-protein phosphotransferase (ptsI), found in Borreliella burgdorferi (strain ATCC 35210 / DSM 4680 / CIP 102532 / B31) (Borrelia burgdorferi).